Here is an 840-residue protein sequence, read N- to C-terminus: DNA helicase MCM8 (840 aa).

The tract at residues 16-54 is disordered; it reads QSWKRGRGGGNFSGKWREREHRPDLSKTTGKRTSEQTPQ. The span at 30–40 shows a compositional bias: basic and acidic residues; the sequence is KWREREHRPDL. One can recognise an MCM domain in the interval 402 to 609; sequence LFKLIVNSLC…HHDHLLSEHV (208 aa). ATP is bound at residue 454–461; sequence GDPGLGKS. Serine 630 carries the post-translational modification Phosphoserine.

It belongs to the MCM family. Component of the MCM8-MCM9 complex, which forms a hexamer composed of MCM8 and MCM9. Interacts with the DNA mismatch repair (MMR) complex composed at least of MSH2, MSH3, MSH6, PMS1 and MLH1. Interacts with RAD51; the interaction recruits RAD51 to DNA damage sites. Interacts with the MRN complex composed of MRE11, RAD50 and NBN/NBS1. Interacts with CDC6 and ORC2. Interacts with HROB; the interaction recruits the MCM8-MCM9 complex to DNA damage sites. In terms of tissue distribution, highest levels in placenta, lung and pancreas. Low levels in skeletal muscle and kidney. Expressed in various tumors with highest levels in colon and lung cancers.

The protein resides in the nucleus. It is found in the chromosome. The catalysed reaction is ATP + H2O = ADP + phosphate + H(+). Its function is as follows. Component of the MCM8-MCM9 complex, a complex involved in the repair of double-stranded DNA breaks (DBSs) and DNA interstrand cross-links (ICLs) by homologous recombination (HR). Required for DNA resection by the MRE11-RAD50-NBN/NBS1 (MRN) complex by recruiting the MRN complex to the repair site and by promoting the complex nuclease activity. Probably by regulating the localization of the MNR complex, indirectly regulates the recruitment of downstream effector RAD51 to DNA damage sites including DBSs and ICLs. The MCM8-MCM9 complex is dispensable for DNA replication and S phase progression. However, may play a non-essential for DNA replication: may be involved in the activation of the prereplicative complex (pre-RC) during G(1) phase by recruiting CDC6 to the origin recognition complex (ORC). Probably by regulating HR, plays a key role during gametogenesis. Stabilizes MCM9 protein. The chain is DNA helicase MCM8 (MCM8) from Homo sapiens (Human).